The following is a 94-amino-acid chain: Pyrimidine/purine nucleoside phosphorylase (94 aa).

Belongs to the nucleoside phosphorylase PpnP family.

The catalysed reaction is a purine D-ribonucleoside + phosphate = a purine nucleobase + alpha-D-ribose 1-phosphate. It carries out the reaction adenosine + phosphate = alpha-D-ribose 1-phosphate + adenine. It catalyses the reaction cytidine + phosphate = cytosine + alpha-D-ribose 1-phosphate. The enzyme catalyses guanosine + phosphate = alpha-D-ribose 1-phosphate + guanine. The catalysed reaction is inosine + phosphate = alpha-D-ribose 1-phosphate + hypoxanthine. It carries out the reaction thymidine + phosphate = 2-deoxy-alpha-D-ribose 1-phosphate + thymine. It catalyses the reaction uridine + phosphate = alpha-D-ribose 1-phosphate + uracil. The enzyme catalyses xanthosine + phosphate = alpha-D-ribose 1-phosphate + xanthine. In terms of biological role, catalyzes the phosphorolysis of diverse nucleosides, yielding D-ribose 1-phosphate and the respective free bases. Can use uridine, adenosine, guanosine, cytidine, thymidine, inosine and xanthosine as substrates. Also catalyzes the reverse reactions. The polypeptide is Pyrimidine/purine nucleoside phosphorylase (Psychromonas ingrahamii (strain DSM 17664 / CCUG 51855 / 37)).